The chain runs to 805 residues: Sucrose synthase (805 aa).

Positions 275–752 (MVFNVVILSP…GLKRIQEKYT (478 aa)) are GT-B glycosyltransferase.

The protein belongs to the glycosyltransferase 1 family. Plant sucrose synthase subfamily.

The catalysed reaction is an NDP-alpha-D-glucose + D-fructose = a ribonucleoside 5'-diphosphate + sucrose + H(+). Functionally, sucrose-cleaving enzyme that provides UDP-glucose and fructose for various metabolic pathways. This chain is Sucrose synthase, found in Solanum tuberosum (Potato).